A 586-amino-acid polypeptide reads, in one-letter code: uncharacterized protein (586 aa).

2 disordered regions span residues 17-64 and 80-123; these read VRRT…ETEE and HSCS…GGAN. Residues 28-37 show a composition bias toward polar residues; that stretch reads PSTSGSIAWT. Composition is skewed to low complexity over residues 38–52 and 80–91; these read SSESGSAHSSRVSSS and HSCSAATTSQQS. Residues 94–110 are compositionally biased toward basic and acidic residues; it reads QSKEHRIGGIKKEEKPI. A compositionally biased stretch (gly residues) spans 112–123; that stretch reads MGGGSSENGGAN. A run of 12 helical transmembrane segments spans residues 151–171, 191–211, 218–238, 243–263, 283–303, 317–337, 375–395, 413–433, 441–461, 466–486, 513–533, and 536–556; these read WVILVIFMFLSGSNGAQWIQY, WTSMIYMLTYILFFIPAAWLL, LSVLLGALGNCVGAWIKLLST, FWVTFVGQTIVGASQMFTLGI, LGVFGNQLGIAVGFVLPPLIV, TLFLGSAVLNTSILALVICFF, FVILFITYGINTGVFYAISTL, YVGLLIVVAGMAGSVVGGFIL, LTTIMIYLFSFVGMLSFTLTI, MVLVFINAALLGFFMTGYLPI, IFGIALTWLMGIVMHGFGTFT, and IIMSSCLVVGTILTCFIREDL.

The protein belongs to the major facilitator superfamily. Feline leukemia virus subgroup C receptor (TC 2.A.1.28.1) family.

The protein resides in the membrane. This is an uncharacterized protein from Caenorhabditis elegans.